Consider the following 312-residue polypeptide: MPQQSMQASLIDPIAEIERSNCKIAHLRLGLVFTSDNNERALQDSGLYSPDSEDSSVDIAGRRFHSGTLNGSSIVYVKTGSPSVNMATTLQILLVRFNIHGVIYFGNAGSLDKKTMVPGDVSVPQAVAFTGVWNWKKFGSEKGKLVFGDFNYPENGENLLGTVEYEKIKMFSPSEAPKEVFWLPITKSWYNAATEALKDMKLRKCYSDECLPGKPKVVFGSKSSTSDFYVRNKAYGDFLNDNFDAKTADTASASVALTSLSNEKLFVVFQGVSNVAGETSSNSRVSYLASYNAFLAATKFINSIPTPRLACE.

Positions 1 to 24 (MPQQSMQASLIDPIAEIERSNCKI) are cleaved as a signal peptide. An N-linked (GlcNAc...) asparagine glycan is attached at asparagine 70.

The protein to wound-inducible poplar endochitinases. In terms of assembly, monomer. Bark.

Functionally, may play a role in nitrogen storage. This chain is Bark storage protein A (BSPA), found in Populus deltoides (Eastern poplar).